The sequence spans 415 residues: D-threonate kinase (415 aa).

Residues Asp9, Arg53, and 81–84 (KIDS) contribute to the substrate site. Residues Ser251, 345–348 (GGET), and Gly392 each bind ATP.

It belongs to the four-carbon acid sugar kinase family.

It carries out the reaction D-threonate + ATP = 4-O-phospho-D-threonate + ADP + H(+). Its function is as follows. Catalyzes the ATP-dependent phosphorylation of D-threonate to D-threonate 4-phosphate. Can also phosphorylate 4-hydroxy-L-threonine, with lower efficiency. The protein is D-threonate kinase of Cupriavidus necator (strain ATCC 17699 / DSM 428 / KCTC 22496 / NCIMB 10442 / H16 / Stanier 337) (Ralstonia eutropha).